A 277-amino-acid polypeptide reads, in one-letter code: NH(3)-dependent NAD(+) synthetase (277 aa).

Glycine 36–serine 43 lines the ATP pocket. Aspartate 42 is a binding site for Mg(2+). Residue arginine 118 coordinates deamido-NAD(+). ATP is bound at residue threonine 138. Glutamate 143 is a Mg(2+) binding site. ATP contacts are provided by lysine 167 and serine 189.

Belongs to the NAD synthetase family. As to quaternary structure, homodimer.

The catalysed reaction is deamido-NAD(+) + NH4(+) + ATP = AMP + diphosphate + NAD(+) + H(+). It functions in the pathway cofactor biosynthesis; NAD(+) biosynthesis; NAD(+) from deamido-NAD(+) (ammonia route): step 1/1. Functionally, catalyzes the ATP-dependent amidation of deamido-NAD to form NAD. Uses ammonia as a nitrogen source. This is NH(3)-dependent NAD(+) synthetase from Chlorobaculum tepidum (strain ATCC 49652 / DSM 12025 / NBRC 103806 / TLS) (Chlorobium tepidum).